We begin with the raw amino-acid sequence, 145 residues long: Protein SprT-like (145 aa).

The SprT-like domain maps to 4-140 (TNYVQEVSLA…VCGNCHGKLI (137 aa)). Position 64 (His64) interacts with Zn(2+). Glu65 is an active-site residue. His68 lines the Zn(2+) pocket.

Belongs to the SprT family. It depends on Zn(2+) as a cofactor.

It localises to the cytoplasm. The chain is Protein SprT-like from Streptococcus pyogenes serotype M18 (strain MGAS8232).